The chain runs to 248 residues: PF03932 family protein CutC (248 aa).

It belongs to the CutC family. In terms of assembly, homodimer.

It is found in the cytoplasm. The protein is PF03932 family protein CutC of Escherichia coli O7:K1 (strain IAI39 / ExPEC).